We begin with the raw amino-acid sequence, 514 residues long: Probable transposase for insertion sequence element IS1353 (514 aa).

Residues 172–216 (KGDTSLEQRHEALLRELAELESQNQRLRMENAILEKASELIKKDM) adopt a coiled-coil conformation. Positions 346–510 (HASAPNTKWL…SPIEYRHAVG (165 aa)) constitute an Integrase catalytic domain. Residues Asp-357 and Asp-417 each coordinate Mg(2+).

The protein belongs to the transposase 8 family.

Functionally, probably involved in the transposition of insertion sequence IS1353. This is Probable transposase for insertion sequence element IS1353 from Shigella flexneri.